Here is a 165-residue protein sequence, read N- to C-terminus: Secreted acidic protein 2 (165 aa).

Acidic residues-rich tracts occupy residues 1–58 and 80–102; these read WSXS…DDSG and ESSDDDNERDDTSDDSVGDDAYN. Residues 1 to 112 are disordered; that stretch reads WSXSGDDDDD…DDSQAGELNS (112 aa). Positions 103–112 are enriched in polar residues; sequence DDSQAGELNS.

Component of the acid-insoluble and acid-soluble organic matrix of the aragonitic skeleton (at protein level).

It localises to the secreted. This chain is Secreted acidic protein 2, found in Acropora millepora (Staghorn coral).